The primary structure comprises 433 residues: 3-phosphoshikimate 1-carboxyvinyltransferase (433 aa).

The 3-phosphoshikimate site is built by K23, S24, and R28. A phosphoenolpyruvate-binding site is contributed by K23. 2 residues coordinate phosphoenolpyruvate: G95 and R123. 3-phosphoshikimate-binding residues include S167, Q169, D317, and K344. A phosphoenolpyruvate-binding site is contributed by Q169. The Proton acceptor role is filled by D317. 2 residues coordinate phosphoenolpyruvate: R348 and R390.

This sequence belongs to the EPSP synthase family. Monomer.

It localises to the cytoplasm. The enzyme catalyses 3-phosphoshikimate + phosphoenolpyruvate = 5-O-(1-carboxyvinyl)-3-phosphoshikimate + phosphate. It participates in metabolic intermediate biosynthesis; chorismate biosynthesis; chorismate from D-erythrose 4-phosphate and phosphoenolpyruvate: step 6/7. Catalyzes the transfer of the enolpyruvyl moiety of phosphoenolpyruvate (PEP) to the 5-hydroxyl of shikimate-3-phosphate (S3P) to produce enolpyruvyl shikimate-3-phosphate and inorganic phosphate. The sequence is that of 3-phosphoshikimate 1-carboxyvinyltransferase from Staphylococcus epidermidis (strain ATCC 12228 / FDA PCI 1200).